Reading from the N-terminus, the 461-residue chain is Cysteine--tRNA ligase (461 aa).

Residue C28 coordinates Zn(2+). The short motif at I30–H40 is the 'HIGH' region element. Residues C209, H234, and E238 each contribute to the Zn(2+) site. Residues K266 to S270 carry the 'KMSKS' region motif. Residue K269 participates in ATP binding.

The protein belongs to the class-I aminoacyl-tRNA synthetase family. In terms of assembly, monomer. The cofactor is Zn(2+).

The protein localises to the cytoplasm. The enzyme catalyses tRNA(Cys) + L-cysteine + ATP = L-cysteinyl-tRNA(Cys) + AMP + diphosphate. The protein is Cysteine--tRNA ligase of Shigella sonnei (strain Ss046).